The sequence spans 493 residues: Cysteine--tRNA ligase (493 aa).

C29 contributes to the Zn(2+) binding site. A 'HIGH' region motif is present at residues 31 to 41; that stretch reads VTVYDLSHIGH. Positions 209, 234, and 238 each coordinate Zn(2+). Positions 266-270 match the 'KMSKS' region motif; sequence KMSKS. K269 lines the ATP pocket.

Belongs to the class-I aminoacyl-tRNA synthetase family. Monomer. Requires Zn(2+) as cofactor.

It is found in the cytoplasm. It catalyses the reaction tRNA(Cys) + L-cysteine + ATP = L-cysteinyl-tRNA(Cys) + AMP + diphosphate. The polypeptide is Cysteine--tRNA ligase (Syntrophobacter fumaroxidans (strain DSM 10017 / MPOB)).